The sequence spans 89 residues: Small ribosomal subunit protein uS19 (89 aa).

It belongs to the universal ribosomal protein uS19 family.

In terms of biological role, protein S19 forms a complex with S13 that binds strongly to the 16S ribosomal RNA. This is Small ribosomal subunit protein uS19 from Xanthomonas axonopodis pv. citri (strain 306).